The following is a 949-amino-acid chain: Probable transcriptional regulatory protein STB4 (949 aa).

A DNA-binding region (zn(2)-C6 fungal-type) is located at residues 87 to 113; that stretch reads CELCKKRKVKCDGNNPCLNCSKHQKEC. 2 stretches are compositionally biased toward low complexity: residues 164 to 178 and 200 to 212; these read DGVS…NPNS and SGSN…NNNS. 2 disordered regions span residues 164–214 and 862–888; these read DGVS…NSFP and GERE…ATRS. Basic and acidic residues predominate over residues 862–874; it reads GEREENADERQEN.

The protein resides in the nucleus. Binds to SIN3. This chain is Probable transcriptional regulatory protein STB4 (STB4), found in Saccharomyces cerevisiae (strain ATCC 204508 / S288c) (Baker's yeast).